Reading from the N-terminus, the 79-residue chain is Translational regulator CsrA (79 aa).

Belongs to the CsrA/RsmA family. Homodimer; the beta-strands of each monomer intercalate to form a hydrophobic core, while the alpha-helices form wings that extend away from the core.

The protein localises to the cytoplasm. A translational regulator that binds mRNA to regulate translation initiation and/or mRNA stability. Usually binds in the 5'-UTR at or near the Shine-Dalgarno sequence preventing ribosome-binding, thus repressing translation. Its main target seems to be the major flagellin gene, while its function is anatagonized by FliW. This is Translational regulator CsrA from Geobacter sulfurreducens (strain ATCC 51573 / DSM 12127 / PCA).